A 298-amino-acid chain; its full sequence is Nitrogenase iron protein (298 aa).

13–20 (GKGGIGKS) is a binding site for ATP. Cys-101 lines the [4Fe-4S] cluster pocket. Arg-104 bears the ADP-ribosylarginine; by dinitrogenase reductase ADP-ribosyltransferase mark. Cys-135 contributes to the [4Fe-4S] cluster binding site.

The protein belongs to the NifH/BchL/ChlL family. In terms of assembly, homodimer. [4Fe-4S] cluster serves as cofactor. In terms of processing, the reversible ADP-ribosylation of Arg-104 inactivates the nitrogenase reductase and regulates nitrogenase activity.

The enzyme catalyses N2 + 8 reduced [2Fe-2S]-[ferredoxin] + 16 ATP + 16 H2O = H2 + 8 oxidized [2Fe-2S]-[ferredoxin] + 2 NH4(+) + 16 ADP + 16 phosphate + 6 H(+). Functionally, the key enzymatic reactions in nitrogen fixation are catalyzed by the nitrogenase complex, which has 2 components: the iron protein and the molybdenum-iron protein. The protein is Nitrogenase iron protein of Cyanothece sp. (strain PCC 7425 / ATCC 29141).